The chain runs to 352 residues: Pyrimidine monooxygenase RutA (352 aa).

FMN-binding positions include 49-50, Asn115, Glu124, 140-141, and Ser189; these read IK and RY.

Belongs to the NtaA/SnaA/DszA monooxygenase family. RutA subfamily.

The catalysed reaction is uracil + FMNH2 + NADH + O2 = (Z)-3-ureidoacrylate + FMN + NAD(+) + H2O + H(+). It catalyses the reaction thymine + FMNH2 + NADH + O2 = (Z)-2-methylureidoacrylate + FMN + NAD(+) + H2O + H(+). Catalyzes the pyrimidine ring opening between N-3 and C-4 by an unusual flavin hydroperoxide-catalyzed mechanism, adding oxygen atoms in the process to yield ureidoacrylate peracid, that immediately reacts with FMN forming ureidoacrylate and FMN-N(5)-oxide. The FMN-N(5)-oxide reacts spontaneously with NADH to produce FMN. Requires the flavin reductase RutF to regenerate FMN in vivo. In Caulobacter segnis (strain ATCC 21756 / DSM 7131 / JCM 7823 / NBRC 15250 / LMG 17158 / TK0059) (Mycoplana segnis), this protein is Pyrimidine monooxygenase RutA.